Consider the following 208-residue polypeptide: Imidazoleglycerol-phosphate dehydratase (208 aa).

It belongs to the imidazoleglycerol-phosphate dehydratase family.

The protein resides in the cytoplasm. It catalyses the reaction D-erythro-1-(imidazol-4-yl)glycerol 3-phosphate = 3-(imidazol-4-yl)-2-oxopropyl phosphate + H2O. It functions in the pathway amino-acid biosynthesis; L-histidine biosynthesis; L-histidine from 5-phospho-alpha-D-ribose 1-diphosphate: step 6/9. The sequence is that of Imidazoleglycerol-phosphate dehydratase from Psychrobacter sp. (strain PRwf-1).